The primary structure comprises 221 residues: Endonuclease V (221 aa).

Mg(2+) contacts are provided by aspartate 44 and aspartate 112.

This sequence belongs to the endonuclease V family. It depends on Mg(2+) as a cofactor.

Its subcellular location is the cytoplasm. It catalyses the reaction Endonucleolytic cleavage at apurinic or apyrimidinic sites to products with a 5'-phosphate.. Its function is as follows. DNA repair enzyme involved in the repair of deaminated bases. Selectively cleaves double-stranded DNA at the second phosphodiester bond 3' to a deoxyinosine leaving behind the intact lesion on the nicked DNA. This is Endonuclease V from Trichormus variabilis (strain ATCC 29413 / PCC 7937) (Anabaena variabilis).